We begin with the raw amino-acid sequence, 310 residues long: Porphobilinogen deaminase (310 aa).

Cys-242 carries the S-(dipyrrolylmethanemethyl)cysteine modification.

This sequence belongs to the HMBS family. Monomer. Dipyrromethane serves as cofactor.

The enzyme catalyses 4 porphobilinogen + H2O = hydroxymethylbilane + 4 NH4(+). The protein operates within porphyrin-containing compound metabolism; protoporphyrin-IX biosynthesis; coproporphyrinogen-III from 5-aminolevulinate: step 2/4. Tetrapolymerization of the monopyrrole PBG into the hydroxymethylbilane pre-uroporphyrinogen in several discrete steps. The chain is Porphobilinogen deaminase from Shewanella sp. (strain ANA-3).